A 394-amino-acid polypeptide reads, in one-letter code: Elongation factor Tu 1 (394 aa).

The 195-residue stretch at 10–204 (KPHVNVGTIG…YLDSYIPEPE (195 aa)) folds into the tr-type G domain. A G1 region spans residues 19 to 26 (GHVDHGKT). 19-26 (GHVDHGKT) lines the GTP pocket. A Mg(2+)-binding site is contributed by Thr-26. The interval 60–64 (GITIN) is G2. Residues 81–84 (DCPG) form a G3 region. GTP is bound by residues 81–85 (DCPGH) and 136–139 (NKCD). The interval 136–139 (NKCD) is G4. Residues 174 to 176 (SAL) are G5.

This sequence belongs to the TRAFAC class translation factor GTPase superfamily. Classic translation factor GTPase family. EF-Tu/EF-1A subfamily. As to quaternary structure, monomer.

The protein resides in the cytoplasm. The enzyme catalyses GTP + H2O = GDP + phosphate + H(+). In terms of biological role, GTP hydrolase that promotes the GTP-dependent binding of aminoacyl-tRNA to the A-site of ribosomes during protein biosynthesis. In Yersinia enterocolitica serotype O:8 / biotype 1B (strain NCTC 13174 / 8081), this protein is Elongation factor Tu 1.